Here is a 379-residue protein sequence, read N- to C-terminus: MNQTIVIKIGTSSLTDNETGQLSLSTIAALVEVLTRLRAAGHRVVLVSSGAVGVGCRRLGIQERPKKIALKQAIAAVGQGRLMRIYDDLFTSLGQPIAQILLTRPELMERTCYVNAYNTFQALFELGVIAIVNENDTVAIDELKFGDNDTLSALVASLIEADWLFILTDVDRLYSADPRLFPEAAAIARVSPAELAQLSIDAGSSGSQWGTGGMATKLAAARIATSAGVEMAITRGRQPGNILKIMAGEAIGTRFEAQKRSDNARKRWIAYGLLPMGKIYLDAGAIQAICQGGKSLLAAGITKVEGEFSASESVQLCDQEGRELARGIVNYSSEEIDRVKGQHSERIASLLGYMAAETIIHRDNLVILSASSTTSTNKG.

Residue lysine 8 coordinates ATP. Substrate-binding residues include serine 49, aspartate 136, and asparagine 148. ATP is bound by residues 168-169 (TD) and 211-217 (TGGMATK). Residues 276–354 (MGKIYLDAGA…ERIASLLGYM (79 aa)) form the PUA domain.

This sequence belongs to the glutamate 5-kinase family.

Its subcellular location is the cytoplasm. The catalysed reaction is L-glutamate + ATP = L-glutamyl 5-phosphate + ADP. The protein operates within amino-acid biosynthesis; L-proline biosynthesis; L-glutamate 5-semialdehyde from L-glutamate: step 1/2. Its function is as follows. Catalyzes the transfer of a phosphate group to glutamate to form L-glutamate 5-phosphate. In Microcystis aeruginosa (strain NIES-843 / IAM M-2473), this protein is Glutamate 5-kinase.